The sequence spans 624 residues: UvrABC system protein C (624 aa).

A GIY-YIG domain is found at 27–105; it reads LSPGVYRMLS…IKSLGPRYNI (79 aa). Residues 215-250 enclose the UVR domain; that stretch reads RRVQHDLTARMESAAEAMEYEAAAVFRDRIRALTRI.

Belongs to the UvrC family. Interacts with UvrB in an incision complex.

It is found in the cytoplasm. Its function is as follows. The UvrABC repair system catalyzes the recognition and processing of DNA lesions. UvrC both incises the 5' and 3' sides of the lesion. The N-terminal half is responsible for the 3' incision and the C-terminal half is responsible for the 5' incision. This chain is UvrABC system protein C, found in Paramagnetospirillum magneticum (strain ATCC 700264 / AMB-1) (Magnetospirillum magneticum).